The primary structure comprises 887 residues: Translation initiation factor IF-2 (887 aa).

3 disordered regions span residues 31–87 (KLAQ…PRRI), 94–113 (SFVS…DSDA), and 129–285 (VETE…KWRK). The span at 42–59 (SSSEKPSTKVPEKIAKEK) shows a compositional bias: basic and acidic residues. 2 stretches are compositionally biased toward basic and acidic residues: residues 150-171 (VVAK…KEPP) and 199-212 (PKKE…EKTK). Over residues 213 to 223 (TTQTKPQQSSD) the composition is skewed to low complexity. Over residues 241–273 (YRRDVSKKSGSDFRDRAKKDDNPKAFTGRDRYG) the composition is skewed to basic and acidic residues. A tr-type G domain is found at 393-562 (TRPPIVAFMG…ALQAEVLELK (170 aa)). The segment at 402-409 (GHVDHGKT) is G1. Residue 402–409 (GHVDHGKT) coordinates GTP. The segment at 427–431 (AITQH) is G2. A G3 region spans residues 448 to 451 (DTPG). GTP is bound by residues 448 to 452 (DTPGH) and 502 to 505 (NKCD). The tract at residues 502-505 (NKCD) is G4. Positions 538-540 (SAK) are G5.

Belongs to the TRAFAC class translation factor GTPase superfamily. Classic translation factor GTPase family. IF-2 subfamily.

It is found in the cytoplasm. In terms of biological role, one of the essential components for the initiation of protein synthesis. Protects formylmethionyl-tRNA from spontaneous hydrolysis and promotes its binding to the 30S ribosomal subunits. Also involved in the hydrolysis of GTP during the formation of the 70S ribosomal complex. This is Translation initiation factor IF-2 from Chlamydia caviae (strain ATCC VR-813 / DSM 19441 / 03DC25 / GPIC) (Chlamydophila caviae).